Here is a 357-residue protein sequence, read N- to C-terminus: Glycerol-1-phosphate dehydrogenase [NAD(P)+] (357 aa).

NAD(+) is bound by residues 104-108 (GKTID) and 126-129 (TAAS). Residue aspartate 131 participates in substrate binding. Serine 135 contributes to the NAD(+) binding site. Aspartate 178 serves as a coordination point for substrate. Zn(2+) is bound by residues aspartate 178 and histidine 258. Histidine 262 contacts substrate. Histidine 274 provides a ligand contact to Zn(2+).

It belongs to the glycerol-1-phosphate dehydrogenase family. Requires Zn(2+) as cofactor.

Its subcellular location is the cytoplasm. The catalysed reaction is sn-glycerol 1-phosphate + NAD(+) = dihydroxyacetone phosphate + NADH + H(+). It catalyses the reaction sn-glycerol 1-phosphate + NADP(+) = dihydroxyacetone phosphate + NADPH + H(+). It participates in membrane lipid metabolism; glycerophospholipid metabolism. Catalyzes the NAD(P)H-dependent reduction of dihydroxyacetonephosphate (DHAP or glycerone phosphate) to glycerol 1-phosphate (G1P). The G1P thus generated is used as the glycerophosphate backbone of phospholipids in the cellular membranes of Archaea. In Methanococcoides burtonii (strain DSM 6242 / NBRC 107633 / OCM 468 / ACE-M), this protein is Glycerol-1-phosphate dehydrogenase [NAD(P)+].